A 1588-amino-acid polypeptide reads, in one-letter code: Pentafunctional AROM polypeptide (1588 aa).

The interval 1–392 (MVQLAKVPIL…YGDSAQFVSD (392 aa)) is 3-dehydroquinate synthase. Residues 43-45 (DTN), 78-81 (ETSK), 109-111 (GGV), and Asp114 contribute to the NAD(+) site. Arg125 contributes to the 7-phospho-2-dehydro-3-deoxy-D-arabino-heptonate binding site. 134–135 (TS) lines the NAD(+) pocket. Positions 141 and 147 each coordinate 7-phospho-2-dehydro-3-deoxy-D-arabino-heptonate. Lys156 is a binding site for NAD(+). Residue Asn157 coordinates 7-phospho-2-dehydro-3-deoxy-D-arabino-heptonate. NAD(+) is bound by residues 174-177 (WLET) and Asn185. Glu189 provides a ligand contact to Zn(2+). 7-phospho-2-dehydro-3-deoxy-D-arabino-heptonate contacts are provided by residues 189–192 (EVIK) and Lys258. Residue Glu268 is the Proton acceptor; for 3-dehydroquinate synthase activity of the active site. 7-phospho-2-dehydro-3-deoxy-D-arabino-heptonate is bound by residues 272–276 (RNLLN) and His279. His279 provides a ligand contact to Zn(2+). The active-site Proton acceptor; for 3-dehydroquinate synthase activity is His283. 2 residues coordinate 7-phospho-2-dehydro-3-deoxy-D-arabino-heptonate: His295 and Lys364. His295 serves as a coordination point for Zn(2+). Residues 405–871 (VYPFKDIPAD…WDVLHSELGA (467 aa)) are EPSP synthase. Cys853 serves as the catalytic For EPSP synthase activity. A shikimate kinase region spans residues 890–1080 (SVVIIGMRAA…IPSGRSAFVC (191 aa)). 895-902 (GMRAAGKT) contributes to the ATP binding site. Positions 1081–1293 (LTFDDLTEQT…AAPGQLTVAQ (213 aa)) are 3-dehydroquinase. His1198 functions as the Proton acceptor; for 3-dehydroquinate dehydratase activity in the catalytic mechanism. The Schiff-base intermediate with substrate; for 3-dehydroquinate dehydratase activity role is filled by Lys1227. The shikimate dehydrogenase stretch occupies residues 1306–1588 (PKELFVVGKP…KAIFDAVTKE (283 aa)).

The protein in the N-terminal section; belongs to the sugar phosphate cyclases superfamily. Dehydroquinate synthase family. It in the 2nd section; belongs to the EPSP synthase family. In the 3rd section; belongs to the shikimate kinase family. This sequence in the 4th section; belongs to the type-I 3-dehydroquinase family. The protein in the C-terminal section; belongs to the shikimate dehydrogenase family. In terms of assembly, homodimer. Zn(2+) is required as a cofactor.

The protein resides in the cytoplasm. The enzyme catalyses 7-phospho-2-dehydro-3-deoxy-D-arabino-heptonate = 3-dehydroquinate + phosphate. It catalyses the reaction 3-dehydroquinate = 3-dehydroshikimate + H2O. It carries out the reaction shikimate + NADP(+) = 3-dehydroshikimate + NADPH + H(+). The catalysed reaction is shikimate + ATP = 3-phosphoshikimate + ADP + H(+). The enzyme catalyses 3-phosphoshikimate + phosphoenolpyruvate = 5-O-(1-carboxyvinyl)-3-phosphoshikimate + phosphate. It participates in metabolic intermediate biosynthesis; chorismate biosynthesis; chorismate from D-erythrose 4-phosphate and phosphoenolpyruvate: step 2/7. Its pathway is metabolic intermediate biosynthesis; chorismate biosynthesis; chorismate from D-erythrose 4-phosphate and phosphoenolpyruvate: step 3/7. It functions in the pathway metabolic intermediate biosynthesis; chorismate biosynthesis; chorismate from D-erythrose 4-phosphate and phosphoenolpyruvate: step 4/7. The protein operates within metabolic intermediate biosynthesis; chorismate biosynthesis; chorismate from D-erythrose 4-phosphate and phosphoenolpyruvate: step 5/7. It participates in metabolic intermediate biosynthesis; chorismate biosynthesis; chorismate from D-erythrose 4-phosphate and phosphoenolpyruvate: step 6/7. The AROM polypeptide catalyzes 5 consecutive enzymatic reactions in prechorismate polyaromatic amino acid biosynthesis. The chain is Pentafunctional AROM polypeptide from Saccharomyces cerevisiae (strain Lalvin EC1118 / Prise de mousse) (Baker's yeast).